The primary structure comprises 65 residues: MPKMKTHSGAKKRFKLTGSGKVKRQQANRRHYLEHKSSRLTRRLAGDQIVSTPGEAKAIKRMLGK.

Positions 1 to 29 (MPKMKTHSGAKKRFKLTGSGKVKRQQANR) are disordered.

This sequence belongs to the bacterial ribosomal protein bL35 family.

The chain is Large ribosomal subunit protein bL35 from Kocuria rhizophila (strain ATCC 9341 / DSM 348 / NBRC 103217 / DC2201).